Consider the following 1483-residue polypeptide: Guanylyl cyclase, membrane (1483 aa).

6 consecutive transmembrane segments (helical) span residues 50-70 (ISIIFLTSVLFIGTMTAYISP), 143-163 (FILRMITIGLLLFYFIFTFTA), 168-188 (LWKLFTTITLFLVSCIVLIFE), 198-218 (MVLLFIIIAISSGMTFLPSML), 219-239 (ASGGLCLFFFFYFMFYSQIAG), and 242-262 (MVLLSLVLLISWIILMIISRF). Positions 323–376 (KKDEESNLTGKKQSKVVVSPPPPPTAAAPQQQDNEISTPQNSRKIVDPQSPSSL) are disordered. Over residues 355–376 (DNEISTPQNSRKIVDPQSPSSL) the composition is skewed to polar residues. The Guanylate cyclase 1 domain maps to 395 to 517 (TVLFCEIVNF…DTINTSSRMA (123 aa)). Disordered stretches follow at residues 598–619 (NNTIGKGDDIASGSATGPTHPN) and 672–838 (LTSP…GDDF). The segment covering 610–619 (GSATGPTHPN) has biased composition (polar residues). Low complexity-rich tracts occupy residues 672–684 (LTSPQQQPLPQQS), 693–712 (SPRLSSTPQSTSTLQHSSST), and 720–765 (NNNN…NNNN). The segment covering 772 to 786 (SPISQNTTPTGSLSL) has biased composition (polar residues). The next 6 membrane-spanning stretches (helical) occupy residues 907 to 927 (ILASMLMIVALFGLSGLVDYF), 982 to 1002 (IITGVRYGFVFFCLIVIYVVS), 1016 to 1036 (VVMVFFIVLAAVLIVLTSVPP), 1040 to 1060 (IPLDSVILSIEIMFITICYNF), 1061 to 1081 (SGIKFWYSNIVCAFCIIFIEI), and 1094 to 1114 (IYLSHNYYLITAVLINIITSY). The Guanylate cyclase 2 domain occupies 1168-1296 (TIFLSDIVGF…ESVQITQQME (129 aa)). Residues aspartate 1173, isoleucine 1174, and aspartate 1217 each contribute to the Mg(2+) site. Disordered stretches follow at residues 1348–1369 (QPEVKTRSVSVSKSNFGGSLQY) and 1393–1483 (NQND…SESS). Over residues 1354–1369 (RSVSVSKSNFGGSLQY) the composition is skewed to polar residues. The span at 1405 to 1416 (NENGNESSSSNI) shows a compositional bias: low complexity. A compositionally biased stretch (acidic residues) spans 1432 to 1444 (NEDDESSYEDDQE). The segment covering 1446–1465 (NQYLNNSENNKNNNNNSNQI) has biased composition (low complexity).

The protein belongs to the adenylyl cyclase class-4/guanylyl cyclase family. Homodimer. Mg(2+) serves as cofactor.

The protein localises to the membrane. The enzyme catalyses GTP = 3',5'-cyclic GMP + diphosphate. Activated by guanosine 5'-3-O-(thio)triphosphate (GTPgammaS). Inhibited by calcium. Its function is as follows. Synthesizes cyclic GMP (cGMP) from GTP, after activation by heterotrimeric or monomeric G proteins. Involved in chemotaxis. This Dictyostelium discoideum (Social amoeba) protein is Guanylyl cyclase, membrane (gca).